Here is a 482-residue protein sequence, read N- to C-terminus: Immune evasion protein OPG047 (482 aa).

In terms of domain architecture, BTB spans 20–90; sequence KKFKTIIEAI…SYTGKVYIDS (71 aa). Residues 125 to 222 form the BACK domain; sequence CIECYMMGIE…SNYLSPRGIH (98 aa). Kelch repeat units follow at residues 273-319, 320-363, 365-408, 410-447, and 448-482; these read VVYL…PANN, KLYV…SINN, IYVM…VFGR, LFLVGRNAEFYCESSNTWTLIDDPIYPRDNPELIIVDN, and KLLLIGGFYRGSYIDTIEVYNNRTYSWNIWDGMEW.

The protein belongs to the orthopoxvirus OPG047 family.

Might have a role in the suppression of host immune response. The protein is Immune evasion protein OPG047 (OPG047) of Cynomys gunnisoni (Gunnison's prairie dog).